Consider the following 573-residue polypeptide: MSRVSTAPSGKPTAAHALLSRLRDHGVGKVFGVVGREAASILFDEVEGIDFVLTRHEFTAGVAADVLARITGRPQACWATLGPGMTNLSTGIATSVLDRSPVIALAAQSESHDIFPNDTHQCLDSVAIVAPMSKYAVELQRPHEITDLVDSAVNAAMTEPVGPSFISLPVDLLGSSEGIDTTVPNPPANTPAKPVGVVADGWQKAADQAAALLAEAKHPVLVVGAAAIRSGAVPAIRALAERLNIPVITTYIAKGVLPVGHELNYGAVTGYMDGILNFPALQTMFAPVDLVLTVGYDYAEDLRPSMWQKGIEKKTVRISPTVNPIPRVYRPDVDVVTDVLAFVEHFETATASFGAKQRHDIEPLRARIAEFLADPETYEDGMRVHQVIDSMNTVMEEAAEPGEGTIVSDIGFFRHYGVLFARADQPFGFLTSAGCSSFGYGIPAAIGAQMARPDQPTFLIAGDGGFHSNSSDLETIARLNLPIVTVVVNNDTNGLIELYQNIGHHRSHDPAVKFGGVDFVALAEANGVDATRATNREELLAALRKGAELGRPFLIEVPVNYDFQPGGFGALSI.

Tyrosine 271 and aspartate 301 together coordinate substrate. 410-413 (IGFF) provides a ligand contact to thiamine diphosphate. Substrate is bound at residue 414-415 (RH). Residue 436-438 (SSF) participates in thiamine diphosphate binding. Mg(2+) is bound at residue aspartate 463. Thiamine diphosphate is bound by residues 464–465 (GG), 490–495 (NDTNGL), and tyrosine 561. 2 residues coordinate Mg(2+): asparagine 490 and threonine 492. Residue leucine 571 coordinates substrate.

As to quaternary structure, homotetramer; dimer of dimers. It depends on Mg(2+) as a cofactor. Requires thiamine diphosphate as cofactor.

It catalyses the reaction D-glyceraldehyde 3-phosphate + L-arginine = N(2)-(2-carboxyethyl)-L-arginine + phosphate + H(+). Involved in the biosynthesis of the beta-lactamase inhibitor, clavulanic acid. Catalyzes the thiamine diphosphate (ThDP) dependent condensation of D-glyceraldehyde-3-phosphate (D-G3P) with L-arginine to yield the beta-amino acid, N2-(2-carboxyethyl)arginine (CEA) via a beta-elimination resulting in the formation of an enol which undergoes a second elimination to generate the alpha,beta-unsaturated acryloyl-ThDP. In Streptomyces clavuligerus, this protein is N(2)-(2-carboxyethyl)arginine synthase.